We begin with the raw amino-acid sequence, 287 residues long: MKNILSIQSHVVFGHAGNSAAEFPMRRMGVNVWPLNTVQFSNHTQYAQWKGCVMPANHLTEIVQGIEEIEQLKSCHAVLSGYIGSAEQGGHIIDIVKRVKAVNPDAWYFCDPVMGHPEKGCIVVPGVAEFLCKDALPVSDIIAPNLLELETLSMQKVTNVEQAVMAARTLCDKGPDIVLVKHLSRAGYRTDRFEMLLVTKEHSWHVSRPLVDFGERQPVGVGDLTSGLLLVNLLKGESLQTALEHVAAAVYEVMVTTKEMGEYELQIVAAQDRMVAPNHKFWAIQLD.

Substrate is bound by residues Ser9 and 44-45 (TQ). ATP contacts are provided by residues Asp111, Ala143, Glu148, Lys181, and 208–211 (RPLV). Asp223 contacts substrate.

The protein belongs to the pyridoxine kinase family. PdxY subfamily. As to quaternary structure, homodimer. The cofactor is Mg(2+).

The catalysed reaction is pyridoxal + ATP = pyridoxal 5'-phosphate + ADP + H(+). It participates in cofactor metabolism; pyridoxal 5'-phosphate salvage; pyridoxal 5'-phosphate from pyridoxal: step 1/1. Its function is as follows. Pyridoxal kinase involved in the salvage pathway of pyridoxal 5'-phosphate (PLP). Catalyzes the phosphorylation of pyridoxal to PLP. The polypeptide is Pyridoxal kinase PdxY (Photorhabdus laumondii subsp. laumondii (strain DSM 15139 / CIP 105565 / TT01) (Photorhabdus luminescens subsp. laumondii)).